The sequence spans 178 residues: 6,7-dimethyl-8-ribityllumazine synthase (178 aa).

Residues F23, 61–63 (SFE), and 85–87 (AVI) each bind 5-amino-6-(D-ribitylamino)uracil. (2S)-2-hydroxy-3-oxobutyl phosphate is bound at residue 90–91 (QT). Catalysis depends on H93, which acts as the Proton donor. Y118 is a 5-amino-6-(D-ribitylamino)uracil binding site. R132 provides a ligand contact to (2S)-2-hydroxy-3-oxobutyl phosphate.

Belongs to the DMRL synthase family.

The catalysed reaction is (2S)-2-hydroxy-3-oxobutyl phosphate + 5-amino-6-(D-ribitylamino)uracil = 6,7-dimethyl-8-(1-D-ribityl)lumazine + phosphate + 2 H2O + H(+). Its pathway is cofactor biosynthesis; riboflavin biosynthesis; riboflavin from 2-hydroxy-3-oxobutyl phosphate and 5-amino-6-(D-ribitylamino)uracil: step 1/2. Catalyzes the formation of 6,7-dimethyl-8-ribityllumazine by condensation of 5-amino-6-(D-ribitylamino)uracil with 3,4-dihydroxy-2-butanone 4-phosphate. This is the penultimate step in the biosynthesis of riboflavin. The sequence is that of 6,7-dimethyl-8-ribityllumazine synthase from Thermosynechococcus vestitus (strain NIES-2133 / IAM M-273 / BP-1).